The primary structure comprises 597 residues: MALKLLTSLPMYNFSRVPVSSKDPILLVTSRTRNGYLARPVQCMVANKVSTSPDILRRSANYQPSIWNHDYIESLRIEYVGETCTRQINVLKEQVRMMLHKVVNPLEQLELIEILQRLGLSYHFEEEIKRILDGVYNNDHGGDTWKAENLYATALKFRLLRQHGYSVSQEVFNSFKDERGSFKACLCEDTKGMLSLYEASFFLIEGENILEEARDFSTKHLEEYVKQNKEKNLATLVNHSLEFPLHWRMPRLEARWFINIYRHNQDVNPILLEFAELDFNIVQAAHQADLKQVSTWWKSTGLVENLSFARDRPVENFFWTVGLIFQPQFGYCRRMFTKVFALITTIDDVYDVYGTLDELELFTDVVERWDINAMDQLPDYMKICFLTLHNSVNEMALDTMKEQRFHIIKYLKKAWVDLCRYYLVEAKWYSNKYRPSLQEYIENAWISIGAPTILVHAYFFVTNPITKEALDCLEEYPNIIRWSSIIARLADDLGTSTDELKRGDVPKAIQCYMNETGASEEGAREYIKYLISATWKKMNKDRAASSPFSHIFIEIALNLARMAQCLYQHGDGHGLGNRETKDRILSLLIQPIPLNKD.

The transit peptide at 1 to 56 (MALKLLTSLPMYNFSRVPVSSKDPILLVTSRTRNGYLARPVQCMVANKVSTSPDIL) directs the protein to the chloroplast. (2E)-geranyl diphosphate is bound by residues Arg-310, Asp-347, Asp-351, Arg-488, and Asp-491. Mg(2+) contacts are provided by Asp-347 and Asp-351. The DDXXD motif motif lies at 347–351 (DDVYD). Mg(2+)-binding residues include Asp-491, Thr-495, and Glu-499.

The protein belongs to the terpene synthase family. Tpsb subfamily. Requires Mg(2+) as cofactor. Mn(2+) serves as cofactor.

It localises to the plastid. The protein resides in the chloroplast. It carries out the reaction (2E)-geranyl diphosphate = beta-myrcene + diphosphate. Involved in monoterpene (C10) biosynthesis. The major product is myrcene followed by minor amounts (1.2%) of the cyclic monoterpene limonene. This Quercus ilex (Holly oak) protein is Myrcene synthase, chloroplastic.